A 203-amino-acid polypeptide reads, in one-letter code: MNSERTAEAIPHADPLSIFESWFAEARASEPNDPNAMALATATAEGVPSVRMVLLKGHGPDGFVFYTNLQSRKGGELAANHHVALLFHWKSLRRQIRIEGTIAKVTPAEADAYFASRHPESRLGSAASDQSRPLPDRQTYLDRVDALRAQYPDGNVPRPAHWSGYRVTPSAIEFWQDRDFRLHERRRFLADGQGGWTSTLLYP.

Residues 51–56, 66–67, arginine 72, lysine 73, and glutamine 95 contribute to the FMN site; these read RMVLLK and YT. Position 56 (lysine 56) interacts with substrate. Substrate is bound by residues tyrosine 113, arginine 117, and serine 121. FMN is bound by residues 130–131 and tryptophan 175; that span reads QS. Substrate is bound at residue 181 to 183; it reads RLH. Arginine 185 is an FMN binding site.

This sequence belongs to the pyridoxamine 5'-phosphate oxidase family. In terms of assembly, homodimer. The cofactor is FMN.

It catalyses the reaction pyridoxamine 5'-phosphate + O2 + H2O = pyridoxal 5'-phosphate + H2O2 + NH4(+). The catalysed reaction is pyridoxine 5'-phosphate + O2 = pyridoxal 5'-phosphate + H2O2. It functions in the pathway cofactor metabolism; pyridoxal 5'-phosphate salvage; pyridoxal 5'-phosphate from pyridoxamine 5'-phosphate: step 1/1. Its pathway is cofactor metabolism; pyridoxal 5'-phosphate salvage; pyridoxal 5'-phosphate from pyridoxine 5'-phosphate: step 1/1. Functionally, catalyzes the oxidation of either pyridoxine 5'-phosphate (PNP) or pyridoxamine 5'-phosphate (PMP) into pyridoxal 5'-phosphate (PLP). This is Pyridoxine/pyridoxamine 5'-phosphate oxidase from Novosphingobium aromaticivorans (strain ATCC 700278 / DSM 12444 / CCUG 56034 / CIP 105152 / NBRC 16084 / F199).